A 149-amino-acid chain; its full sequence is Large ribosomal subunit protein uL13 (149 aa).

This sequence belongs to the universal ribosomal protein uL13 family. As to quaternary structure, part of the 50S ribosomal subunit.

Functionally, this protein is one of the early assembly proteins of the 50S ribosomal subunit, although it is not seen to bind rRNA by itself. It is important during the early stages of 50S assembly. The polypeptide is Large ribosomal subunit protein uL13 (Thermosipho africanus (strain TCF52B)).